A 574-amino-acid polypeptide reads, in one-letter code: Aspartate--tRNA ligase (574 aa).

Glu-169 serves as a coordination point for L-aspartate. The segment at 193–196 (QLFK) is aspartate. An L-aspartate-binding site is contributed by Arg-215. Residues 215–217 (RDE) and Gln-224 contribute to the ATP site. L-aspartate is bound at residue His-437. Glu-471 serves as a coordination point for ATP. Residue Arg-478 participates in L-aspartate binding. An ATP-binding site is contributed by 523 to 526 (GLDR).

It belongs to the class-II aminoacyl-tRNA synthetase family. Type 1 subfamily. As to quaternary structure, homodimer.

The protein localises to the cytoplasm. The enzyme catalyses tRNA(Asp) + L-aspartate + ATP = L-aspartyl-tRNA(Asp) + AMP + diphosphate. Functionally, catalyzes the attachment of L-aspartate to tRNA(Asp) in a two-step reaction: L-aspartate is first activated by ATP to form Asp-AMP and then transferred to the acceptor end of tRNA(Asp). The protein is Aspartate--tRNA ligase of Mycoplasma mycoides subsp. mycoides SC (strain CCUG 32753 / NCTC 10114 / PG1).